The primary structure comprises 145 residues: Halilectin 3, alpha chain (145 aa).

A glycan (N-linked (GlcNAc...) asparagine) is linked at Asn73.

As to quaternary structure, probable heterotrimer consisting of an alpha chain and two beta chains. The alpha chain can probably have different glycosylation states. In terms of processing, glycosylated.

Lectin with affinity for N-acetyl-galactosamine, carragenan and glycoprotein porcine stomach mucin (PSM). Has metal-independent hemagglutinating activity towards erythrocytes from rabbit and human. Hemagglutinating activity is not inhibited by D-galactose, D-glucose, D-mannose, D-fucose, methyl-alpha-D-galactopyranoside, methyl-alpha-D-glucopyranoside, N-acetyl-glucosamine, N-acetyl-mannosamine, D-fructose, alpha-D-lactose, beta-D-lactose, D-lactulose, D-sucrose, fucoidan or glycoproteins thyroglobulin and ovalmucoid. The chain is Halilectin 3, alpha chain from Haliclona caerulea (Blue Caribbean sponge).